The primary structure comprises 704 residues: DNA ligase (704 aa).

Residues 43 to 47 (DADYD), 92 to 93 (SL), and Glu124 each bind NAD(+). The active-site N6-AMP-lysine intermediate is the Lys126. 4 residues coordinate NAD(+): Arg147, Glu182, Lys298, and Lys322. Zn(2+)-binding residues include Cys427, Cys430, Cys445, and Cys451. The BRCT domain occupies 625-704 (PVASPVAGRI…DGWLRLIGDA (80 aa)).

This sequence belongs to the NAD-dependent DNA ligase family. LigA subfamily. Mg(2+) is required as a cofactor. Mn(2+) serves as cofactor.

The catalysed reaction is NAD(+) + (deoxyribonucleotide)n-3'-hydroxyl + 5'-phospho-(deoxyribonucleotide)m = (deoxyribonucleotide)n+m + AMP + beta-nicotinamide D-nucleotide.. Its function is as follows. DNA ligase that catalyzes the formation of phosphodiester linkages between 5'-phosphoryl and 3'-hydroxyl groups in double-stranded DNA using NAD as a coenzyme and as the energy source for the reaction. It is essential for DNA replication and repair of damaged DNA. The sequence is that of DNA ligase from Cereibacter sphaeroides (strain KD131 / KCTC 12085) (Rhodobacter sphaeroides).